The following is a 250-amino-acid chain: Triosephosphate isomerase (250 aa).

9-11 is a binding site for substrate; the sequence is NWK. His-95 acts as the Electrophile in catalysis. Residue Glu-167 is the Proton acceptor of the active site. Substrate contacts are provided by residues Gly-173, Ser-212, and 233–234; that span reads GG.

Belongs to the triosephosphate isomerase family. In terms of assembly, homodimer.

Its subcellular location is the cytoplasm. It catalyses the reaction D-glyceraldehyde 3-phosphate = dihydroxyacetone phosphate. It participates in carbohydrate biosynthesis; gluconeogenesis. Its pathway is carbohydrate degradation; glycolysis; D-glyceraldehyde 3-phosphate from glycerone phosphate: step 1/1. Its function is as follows. Involved in the gluconeogenesis. Catalyzes stereospecifically the conversion of dihydroxyacetone phosphate (DHAP) to D-glyceraldehyde-3-phosphate (G3P). This is Triosephosphate isomerase from Nitrosococcus oceani (strain ATCC 19707 / BCRC 17464 / JCM 30415 / NCIMB 11848 / C-107).